The chain runs to 31 residues: uncharacterized protein (31 aa).

A helical membrane pass occupies residues 7–29 (TVVLINFFAAVGLFTLISMRFGW).

It is found in the cell inner membrane. This is an uncharacterized protein from Escherichia coli (strain K12).